The chain runs to 582 residues: ATP-dependent lipid A-core flippase (582 aa).

The next 5 helical transmembrane spans lie at 26–46, 68–88, 140–160, 164–184, and 252–272; these read LIAASVALILNALVDSSLIYL, ILVMLFILLRGVSNYIASYCL, YVLVTIVREGAYLISLFAVMV, WQLSIVLFLLAPIIAFLISIV, and GLVQLIASLALSAVLYVATFP. In terms of domain architecture, ABC transmembrane type-1 spans 27 to 310; sequence IAASVALILN…LTSVNSQFQR (284 aa). The ABC transporter domain maps to 342 to 578; sequence ITFDNVIFSY…GGAYKQLYSM (237 aa). Residue 376-383 coordinates ATP; the sequence is GRSGSGKS.

The protein belongs to the ABC transporter superfamily. Lipid exporter (TC 3.A.1.106) family. As to quaternary structure, homodimer.

Its subcellular location is the cell inner membrane. It catalyses the reaction ATP + H2O + lipid A-core oligosaccharideSide 1 = ADP + phosphate + lipid A-core oligosaccharideSide 2.. Involved in lipopolysaccharide (LPS) biosynthesis. Translocates lipid A-core from the inner to the outer leaflet of the inner membrane. Transmembrane domains (TMD) form a pore in the inner membrane and the ATP-binding domain (NBD) is responsible for energy generation. The polypeptide is ATP-dependent lipid A-core flippase (Haemophilus ducreyi (strain 35000HP / ATCC 700724)).